Here is a 314-residue protein sequence, read N- to C-terminus: MAVASTSLASQLSGPKSLSQPYSGLRRSCPKLDQSHSSLFQHLSLSSSSRKASRAVVAMAGTGKFFVGGNWKCNGTKDLISKLVSDLNSAKLEPDVDVVVAPPFLYLDQVKSSLTDRIEISGQNSWVAKGGAFTGEISVEQLKDIGRKWVILGHSERRHVIGEDDQFIGKKAAYALNEGLGVIACIGEKLEEREAGKTFDVCYEQLKAFADAVPSWENIVVAYEPVWAIGTGKVASPQQAQEVHVAVREWLKKNVSAEVASKTRIIYGGSVNGGNSAELAKEEDIDGFLVGGASLKGPEFATIVNAVTSKKVAA.

Residues 1–22 (MAVASTSLASQLSGPKSLSQPY) are compositionally biased toward polar residues. Positions 1–25 (MAVASTSLASQLSGPKSLSQPYSGL) are disordered. Residues 1–59 (MAVASTSLASQLSGPKSLSQPYSGLRRSCPKLDQSHSSLFQHLSLSSSSRKASRAVVAM) constitute a chloroplast transit peptide. Asn-70 and Lys-72 together coordinate substrate. Residue His-154 is the Electrophile of the active site. Glu-224 functions as the Proton acceptor in the catalytic mechanism.

Belongs to the triosephosphate isomerase family. In terms of assembly, homodimer.

It localises to the plastid. The protein localises to the chloroplast. It catalyses the reaction D-glyceraldehyde 3-phosphate = dihydroxyacetone phosphate. Its pathway is carbohydrate biosynthesis; Calvin cycle. This is Triosephosphate isomerase, chloroplastic (TPI) from Fragaria ananassa (Strawberry).